The chain runs to 393 residues: Protein TsgA (393 aa).

Helical transmembrane passes span 11-31 (WISF…GMVM), 51-71 (FLNA…EIVP), 78-98 (FGFI…SLAL), 101-121 (AAMF…TFLI), 134-154 (LLFT…VAAF), 162-182 (WYWV…LTFG), 206-226 (IGVL…LGFI), 245-265 (ALVS…SFIL), 273-293 (ILTV…TGTQ), 298-318 (WFIL…ITLG), 332-352 (FILT…GPIV), and 361-381 (LLTA…LGFV).

Belongs to the major facilitator superfamily. TsgA family.

The protein localises to the cell inner membrane. The chain is Protein TsgA from Salmonella dublin (strain CT_02021853).